The sequence spans 273 residues: Short-chain dehydrogenase fogB (273 aa).

7 residues coordinate NADP(+): isoleucine 16, aspartate 66, arginine 128, tyrosine 174, lysine 178, valine 207, and threonine 209. The active-site Proton donor is the tyrosine 174. The Lowers pKa of active site Tyr role is filled by lysine 178.

This sequence belongs to the short-chain dehydrogenases/reductases (SDR) family.

In terms of biological role, short-chain dehydrogenase; part of the gene cluster that mediates the biosynthesis of flavoglaucin and congeners (including aspergin, dihydroauroglaucin and auroglaucin), prenylated salicylaldehyde derivatives carrying a saturated or an unsaturated C-7 side chain. The PKS fogA releases the carboxylic acid (8E,10E,12E)-3,5,7-trihydroxytetradeca-8,10,12-trienoic acid as its product, as well as derivatives with one and two double bonds. FogA is indeed able to reduce the initial triketide, thus being at least partially responsible for the differently saturated heptyl side chains of flavoglaucin congeners. The oxidoreductases fogB, fogC and fogD modify the nascent polyketide in fogA-bound form and, together, fogA, fogB, fogC and fogD are necessary for the formation of the aromatic core and the cyclized PKS products are released as salicyl alcohols. In particular, fogB is responsible for oxidation of a hydroxyl group or reduction of remaining double bond(s) at the C-7 residue whereas fogD is probably involved in the reductive release of the modified PKS products. The cytochrome P450 monooxygenase fogE is then responsible for the hydroxylation at C-3 of the benzene ring. The fogE products are substrates of the prenyltransferase fogH and the prenylated benzyl alcohols are subsequently oxidized by the fogF to produce the final aryl aldehydes flavoglaucin and congeners. The short-chain dehydrogenase fogG does not seem to be involved in the biosynthesis of the prenylated salicylaldehyde derivatives. The chain is Short-chain dehydrogenase fogB from Aspergillus ruber (strain CBS 135680).